Reading from the N-terminus, the 257-residue chain is ATP synthase subunit a (257 aa).

6 helical membrane-spanning segments follow: residues 34–54 (ITNI…FSIL), 93–113 (YFPF…IGMV), 122–142 (HFIL…VLGF), 149–169 (FFSL…LVLI), 187–207 (ANIL…YNIM), and 210–230 (GIIF…FSGL).

Belongs to the ATPase A chain family. F-type ATPases have 2 components, CF(1) - the catalytic core - and CF(0) - the membrane proton channel. CF(1) has five subunits: alpha(3), beta(3), gamma(1), delta(1), epsilon(1). CF(0) has three main subunits: a, b and c.

It localises to the mitochondrion inner membrane. Its function is as follows. Mitochondrial membrane ATP synthase (F(1)F(0) ATP synthase or Complex V) produces ATP from ADP in the presence of a proton gradient across the membrane which is generated by electron transport complexes of the respiratory chain. F-type ATPases consist of two structural domains, F(1) - containing the extramembraneous catalytic core and F(0) - containing the membrane proton channel, linked together by a central stalk and a peripheral stalk. During catalysis, ATP synthesis in the catalytic domain of F(1) is coupled via a rotary mechanism of the central stalk subunits to proton translocation. Key component of the proton channel; it may play a direct role in the translocation of protons across the membrane. In Cochliobolus heterostrophus (Southern corn leaf blight fungus), this protein is ATP synthase subunit a (ATP6).